The sequence spans 71 residues: Exodeoxyribonuclease 7 small subunit (71 aa).

The protein belongs to the XseB family. Heterooligomer composed of large and small subunits.

The protein localises to the cytoplasm. It catalyses the reaction Exonucleolytic cleavage in either 5'- to 3'- or 3'- to 5'-direction to yield nucleoside 5'-phosphates.. Bidirectionally degrades single-stranded DNA into large acid-insoluble oligonucleotides, which are then degraded further into small acid-soluble oligonucleotides. This Streptococcus equi subsp. equi (strain 4047) protein is Exodeoxyribonuclease 7 small subunit.